The following is a 1098-amino-acid chain: Protein translocase subunit SecA (1098 aa).

ATP contacts are provided by residues Q176, 194 to 198 (GEGKT), and D696. Residues 1024–1098 (EPEQVREAAP…KYKNCHGQNA (75 aa)) form a disordered region. Composition is skewed to basic and acidic residues over residues 1041 to 1051 (QYREEKQDLSD) and 1058 to 1077 (AEHDTREVKREPVRAEKTVG). C1082, C1084, C1093, and H1094 together coordinate Zn(2+).

The protein belongs to the SecA family. In terms of assembly, monomer and homodimer. Part of the essential Sec protein translocation apparatus which comprises SecA, SecYEG and auxiliary proteins SecDF. Other proteins may also be involved. Requires Zn(2+) as cofactor.

Its subcellular location is the cell inner membrane. It localises to the cytoplasm. It carries out the reaction ATP + H2O + cellular proteinSide 1 = ADP + phosphate + cellular proteinSide 2.. In terms of biological role, part of the Sec protein translocase complex. Interacts with the SecYEG preprotein conducting channel. Has a central role in coupling the hydrolysis of ATP to the transfer of proteins into and across the cell membrane, serving as an ATP-driven molecular motor driving the stepwise translocation of polypeptide chains across the membrane. This is Protein translocase subunit SecA from Phocaeicola vulgatus (strain ATCC 8482 / DSM 1447 / JCM 5826 / CCUG 4940 / NBRC 14291 / NCTC 11154) (Bacteroides vulgatus).